A 32-amino-acid chain; its full sequence is Delta-conotoxin EVIA (32 aa).

Cystine bridges form between Cys-3/Cys-21, Cys-10/Cys-25, and Cys-20/Cys-29. At Pro-6 the chain carries 4-hydroxyproline. Leu-32 carries the post-translational modification Leucine amide.

It belongs to the conotoxin O1 superfamily. Expressed by the venom duct.

It is found in the secreted. In terms of biological role, delta-conotoxins bind to site 6 of voltage-gated sodium channels and inhibit the inactivation process. This toxin inhibits sodium channel inactivation in neuronal membranes from amphibians and mammals (Nav1.2a/SCN1A, Nav1.3/SCN3A and Nav1.6/SCN8A) upon binding to receptor site 6. This chain is Delta-conotoxin EVIA, found in Conus ermineus (Agate cone).